A 333-amino-acid chain; its full sequence is Atrochrysone carboxyl ACP thioesterase MYCFIDRAFT_190111 (333 aa).

His108, His110, Asp112, and His113 together coordinate Zn(2+). Asp112 (proton donor/acceptor) is an active-site residue.

It belongs to the metallo-beta-lactamase superfamily. It depends on Zn(2+) as a cofactor.

It catalyses the reaction atrochrysone carboxyl-[ACP] + H2O = atrochrysone carboxylate + holo-[ACP] + H(+). It functions in the pathway secondary metabolite biosynthesis. Functionally, atrochrysone carboxyl ACP thioesterase; part of the gene cluster that mediates the biosynthesis of an emodin derivative that may be involved in black Sigatoka disease of banana. The pathway begins with the synthesis of atrochrysone thioester by the polyketide synthase PKS8-1. The atrochrysone carboxyl ACP thioesterase MYCFIDRAFT_190111 then breaks the thioester bond and releases the atrochrysone carboxylic acid from PKS8-1. The decarboxylase MYCFIDRAFT_34057 then catalyzes the concerted decarboxylation-elimination required to convert atochrysone carboxylic acid into emodin anthrone, which is further oxidized to emodin by the anthrone oxygenase MYCFIDRAFT_34418. The functions of the other tailoring enzymes as well as the final product of the cluster have still to be identified. The polypeptide is Atrochrysone carboxyl ACP thioesterase MYCFIDRAFT_190111 (Pseudocercospora fijiensis (strain CIRAD86) (Black leaf streak disease fungus)).